Consider the following 396-residue polypeptide: Digeranylgeranylglycerophospholipid reductase (396 aa).

Residues glycine 14, glutamate 33, cysteine 44, glycine 45, glycine 47, arginine 100, alanine 124, glutamate 162, aspartate 283, glycine 295, and isoleucine 296 each coordinate FAD. Positions 338 and 374 each coordinate a 2,3-bis-O-(geranylgeranyl)-sn-glycerol 1-phospholipid.

The protein belongs to the geranylgeranyl reductase family. DGGGPL reductase subfamily. Requires FAD as cofactor.

It catalyses the reaction 2,3-bis-O-(phytanyl)-sn-glycerol 1-phosphate + 8 NADP(+) = 2,3-bis-O-(geranylgeranyl)-sn-glycerol 1-phosphate + 8 NADPH + 8 H(+). The enzyme catalyses 2,3-bis-O-(phytanyl)-sn-glycerol 1-phosphate + 8 NAD(+) = 2,3-bis-O-(geranylgeranyl)-sn-glycerol 1-phosphate + 8 NADH + 8 H(+). The catalysed reaction is a 2,3-bis-O-phytanyl-sn-glycerol 1-phospholipid + 8 A = a 2,3-bis-O-(geranylgeranyl)-sn-glycerol 1-phospholipid + 8 AH2. It carries out the reaction CDP-2,3-bis-O-(geranylgeranyl)-sn-glycerol + 8 AH2 = CDP-2,3-bis-O-(phytanyl)-sn-glycerol + 8 A. It catalyses the reaction archaetidylserine + 8 AH2 = 2,3-bis-O-phytanyl-sn-glycero-3-phospho-L-serine + 8 A. Its pathway is membrane lipid metabolism; glycerophospholipid metabolism. In terms of biological role, is involved in the reduction of 2,3-digeranylgeranylglycerophospholipids (unsaturated archaeols) into 2,3-diphytanylglycerophospholipids (saturated archaeols) in the biosynthesis of archaeal membrane lipids. Catalyzes the formation of archaetidic acid (2,3-di-O-phytanyl-sn-glyceryl phosphate) from 2,3-di-O-geranylgeranylglyceryl phosphate (DGGGP) via the hydrogenation of each double bond of the isoprenoid chains. Is also probably able to reduce double bonds of geranyl groups in CDP-2,3-bis-O-(geranylgeranyl)-sn-glycerol and archaetidylserine, thus acting at various stages in the biosynthesis of archaeal membrane lipids. This Thermoplasma volcanium (strain ATCC 51530 / DSM 4299 / JCM 9571 / NBRC 15438 / GSS1) protein is Digeranylgeranylglycerophospholipid reductase.